Consider the following 378-residue polypeptide: Glutamate 5-kinase (378 aa).

Lys-19 contributes to the ATP binding site. Substrate-binding residues include Ser-60, Asp-147, and Asn-159. Residues Ser-179 to Asp-180 and Ser-221 to Lys-227 each bind ATP. Residues Lys-285–Arg-362 form the PUA domain.

This sequence belongs to the glutamate 5-kinase family.

The protein localises to the cytoplasm. The catalysed reaction is L-glutamate + ATP = L-glutamyl 5-phosphate + ADP. It functions in the pathway amino-acid biosynthesis; L-proline biosynthesis; L-glutamate 5-semialdehyde from L-glutamate: step 1/2. Functionally, catalyzes the transfer of a phosphate group to glutamate to form L-glutamate 5-phosphate. This Gluconobacter oxydans (strain 621H) (Gluconobacter suboxydans) protein is Glutamate 5-kinase.